Here is a 178-residue protein sequence, read N- to C-terminus: MSRVGKKPIEIPAGVTVTVNGNTVTVKGPKGELTRTFHPDMTITVEGNVITVTRPSDEKHHRALHGTTRSLLANMVEGVSKGYEKALELVGVGYRASKQGKKLVLSVGYSHPVEIEPEEGLEIEVPSQTKIIVKGADKQRVGELAANIRAVRPPEPYKGKGIRYEGELVRLKEGKTGK.

This sequence belongs to the universal ribosomal protein uL6 family. As to quaternary structure, part of the 50S ribosomal subunit.

Functionally, this protein binds to the 23S rRNA, and is important in its secondary structure. It is located near the subunit interface in the base of the L7/L12 stalk, and near the tRNA binding site of the peptidyltransferase center. The sequence is that of Large ribosomal subunit protein uL6 from Geobacillus kaustophilus (strain HTA426).